A 281-amino-acid polypeptide reads, in one-letter code: Probable endonuclease 4 (281 aa).

Zn(2+) is bound by residues histidine 69, histidine 109, glutamate 145, aspartate 179, histidine 182, histidine 216, aspartate 229, histidine 231, and glutamate 261.

This sequence belongs to the AP endonuclease 2 family. Zn(2+) serves as cofactor.

The catalysed reaction is Endonucleolytic cleavage to 5'-phosphooligonucleotide end-products.. In terms of biological role, endonuclease IV plays a role in DNA repair. It cleaves phosphodiester bonds at apurinic or apyrimidinic (AP) sites, generating a 3'-hydroxyl group and a 5'-terminal sugar phosphate. This is Probable endonuclease 4 from Aeromonas salmonicida (strain A449).